A 660-amino-acid polypeptide reads, in one-letter code: Potassium voltage-gated channel subfamily KQT member 1 (660 aa).

The segment covering 1–18 (MSSEVKSRWSGSGSQKSG) has biased composition (polar residues). The segment at 1–67 (MSSEVKSRWS…PESRAADSRA (67 aa)) is disordered. Over 1–113 (MSSEVKSRWS…YNFLERPTGW (113 aa)) the chain is Cytoplasmic. The segment covering 53–67 (STDKNPESRAADSRA) has biased composition (basic and acidic residues). The chain crosses the membrane as a helical span at residues 114–135 (KCFIYHFTVFLIVLVCLIFSVM). Residues 136 to 146 (STIEQYHYFAN) are Extracellular-facing. Residues 147-169 (RALVWMEIVLVVFFGTEYIVRLW) form a helical membrane-spanning segment. The Cytoplasmic portion of the chain corresponds to 170 to 185 (SAGCRSKYVGFWGRLR). A helical transmembrane segment spans residues 186–211 (FARKPISIIDLIVVVASVIVLCVGSN). The Extracellular portion of the chain corresponds to 212–219 (GQVFATSA). The helical; Voltage-sensor transmembrane segment at 220 to 235 (IRGIRFLQILRMLHVD) threads the bilayer. The Cytoplasmic segment spans residues 236–253 (RQGGTWRLLGSVVFIHRQ). Residue glutamine 237 participates in a 1,2-diacyl-sn-glycero-3-phospho-(1D-myo-inositol-4,5-bisphosphate) binding. Residues 254–276 (ELITTLYIGFLGLIFSSYFVYLA) traverse the membrane as a helical segment. Residues 277–292 (EKDAVDDSGSQQFGSY) are Extracellular-facing. An intramembrane region (pore-forming) is located at residues 293 to 313 (ADALWWGVVTVTTIGYGDKVP). At 314 to 315 (QT) the chain is on the extracellular side. The helical transmembrane segment at 316–341 (WIGRTIASCFSVFAISFFALPAGILG) threads the bilayer. At 342 to 660 (SGFALKVQQK…RKDQDNQPDL (319 aa)) the chain is on the cytoplasmic side. The segment at 399–426 (SPSPKTKKSVGKRKKLKTDKDNGLNSEK) is disordered. The segment covering 403–415 (KTKKSVGKRKKLK) has biased composition (basic residues). A coiled-coil region spans residues 579 to 615 (KNTIGARLNRVEEKFVHMDQKLNTITDMLHHLVAHQQ).

Belongs to the potassium channel family. KQT (TC 1.A.1.15) subfamily. Kv7.1/KCNQ1 sub-subfamily. Tetramer. Heterotetramer with KCNE1; targets to the membrane raft. Interacts (via C-terminus) with CALM; forms a heterotetramer in a calcium-independent manner. Interacts with KCNE2; form a heterooligomer complex that targets to the membrane raft and leading to currents with an apparently instantaneous activation, a rapid deactivation process and a linear current-voltage relationship and decreases the amplitude of the outward current. Interacts with KCNE3; four KCNE3 molecules are bound to one KCNQ1 tetramer (4:4 KCNQ1:KCNE3 stoichiometry); alters membrane raft localization; affects KCNQ1 structure and gating properties. Interacts with KCNE4; impairs KCNQ1 localization in lipid rafts and inhibits voltage-gated potassium channel activity. Interacts with KCNE5; impairs KCNQ1 localization in lipid rafts and only conducts current upon strong and continued depolarization. In terms of tissue distribution, expressed only in rectal gland and heart. Faintly expressed in intestine. Undetectable in kidney, brain, testis, liver and gills.

The protein resides in the cell membrane. It localises to the cytoplasmic vesicle membrane. It is found in the membrane raft. Its subcellular location is the endoplasmic reticulum. The protein localises to the basolateral cell membrane. It carries out the reaction K(+)(in) = K(+)(out). With respect to regulation, PIP2 molecule is essential to activate KCNQ channels by inducing the coupling of the voltage-sensing domain (VSD) and the pore-forming domain (PD). Upon channel activation, PIP2 disrupts the VSD-calmodulin/CALM interactions, causing the release of CALM from the VSD which triggers the opening of the gate. Calcium potentiates KCNQ1 channel current through calcium-bound CALM. Calcium-bound CALM competes with PIP2 to stabilize the channel open state. Pore-forming subunit of the voltage-gated potassium (Kv) channel involved in the regulation of cardiomyocyte excitability and important in normal development and functions of myocardium, inner ear, stomach and colon. Associates with KCNE beta subunits that modulates current kinetics. Induces a voltage-dependent by rapidly activating and slowly deactivating potassium-selective outward current. Also promotes a delayed voltage activated potassium current showing outward rectification characteristic. During beta-adrenergic receptor stimulation participates in cardiac repolarization by associating with KCNE1 to form the I(Ks) cardiac potassium current that increases the amplitude and slows down the activation kinetics of outward potassium current I(Ks). When associated with KCNE3, forms the potassium channel that is important for cyclic AMP-stimulated intestinal secretion of chloride ions. When associated with KCNE2, forms a heterooligomer complex leading to currents with an apparently instantaneous activation, a rapid deactivation process and a linear current-voltage relationship and decreases the amplitude of the outward current. When associated with KCNE4, inhibits voltage-gated potassium channel activity. When associated with KCNE5, this complex only conducts current upon strong and continued depolarization. The protein is Potassium voltage-gated channel subfamily KQT member 1 of Squalus acanthias (Spiny dogfish).